The primary structure comprises 671 residues: DNA ligase (671 aa).

NAD(+) is bound by residues aspartate 32–aspartate 36, serine 81–leucine 82, and glutamate 113. Lysine 115 (N6-AMP-lysine intermediate) is an active-site residue. Positions 136, 173, 290, and 314 each coordinate NAD(+). Zn(2+)-binding residues include cysteine 408, cysteine 411, cysteine 426, and cysteine 432. One can recognise a BRCT domain in the interval glutamate 593–serine 671.

It belongs to the NAD-dependent DNA ligase family. LigA subfamily. Mg(2+) serves as cofactor. It depends on Mn(2+) as a cofactor.

The catalysed reaction is NAD(+) + (deoxyribonucleotide)n-3'-hydroxyl + 5'-phospho-(deoxyribonucleotide)m = (deoxyribonucleotide)n+m + AMP + beta-nicotinamide D-nucleotide.. Functionally, DNA ligase that catalyzes the formation of phosphodiester linkages between 5'-phosphoryl and 3'-hydroxyl groups in double-stranded DNA using NAD as a coenzyme and as the energy source for the reaction. It is essential for DNA replication and repair of damaged DNA. This chain is DNA ligase, found in Escherichia coli O157:H7.